A 53-amino-acid chain; its full sequence is MESHHKWGIAFIAAGLALEILFPVLLVFDTILIVVGIALILFGGREKKIEGVS.

Residues 20 to 42 form a helical membrane-spanning segment; sequence ILFPVLLVFDTILIVVGIALILF.

The protein resides in the membrane. This is an uncharacterized protein from Archaeoglobus fulgidus (strain ATCC 49558 / DSM 4304 / JCM 9628 / NBRC 100126 / VC-16).